A 245-amino-acid polypeptide reads, in one-letter code: MYPVDLHMHTVASTHAYSTLSDYIAQAKQKGIKLFAITDHGPDMEDAPHHWHFINMRIWPRVVDGVGILRGIEANIKNVDGEIDCSGKMFDSLDLIIAGFHEPVFAPHDKATNTQAMIATIASGNVHIISHPGNPKYEIDVKAVAEAAAKHQVALEINNSSFLHSRKGSEDNCRAVAAAVRDAGGWVALGSDSHTAFSMGEFEECLKILDAVDFPPERILNVSPRRLLNFLESRGMAPIAEFADL.

Positions 7, 9, 15, 40, 73, 101, 131, 192, and 194 each coordinate Zn(2+).

This sequence belongs to the PHP family. As to quaternary structure, homotrimer. The cofactor is Zn(2+).

The chain is Probable phosphatase YcdX from Shigella dysenteriae serotype 1 (strain Sd197).